Reading from the N-terminus, the 878-residue chain is Outer membrane usher protein FimD (878 aa).

The signal sequence occupies residues 1–45; that stretch reads MSYLNLRLYQRNTQCLHIRKHRLAGFFVRLVVACAFAAQAPLSSA. A disulfide bridge connects residues cysteine 855 and cysteine 877.

The protein belongs to the fimbrial export usher family.

Its subcellular location is the cell outer membrane. Its function is as follows. Involved in the export and assembly of FimA fimbrial subunits across the outer membrane. The polypeptide is Outer membrane usher protein FimD (fimD) (Escherichia coli (strain K12)).